Reading from the N-terminus, the 274-residue chain is tRNA pseudouridine synthase A (274 aa).

D51 functions as the Nucleophile in the catalytic mechanism. Y109 serves as a coordination point for substrate.

The protein belongs to the tRNA pseudouridine synthase TruA family. In terms of assembly, homodimer.

It carries out the reaction uridine(38/39/40) in tRNA = pseudouridine(38/39/40) in tRNA. Functionally, formation of pseudouridine at positions 38, 39 and 40 in the anticodon stem and loop of transfer RNAs. The protein is tRNA pseudouridine synthase A of Acidovorax ebreus (strain TPSY) (Diaphorobacter sp. (strain TPSY)).